The following is a 51-amino-acid chain: MTKEHEIINSIQEVSLEELDQIIGAGKNGVFKTISHECHLNTWAFLATCCS.

Residues 1-25 (MTKEHEIINSIQEVSLEELDQIIGA) constitute a propeptide that is removed on maturation. Cross-links (beta-methyllanthionine (Thr-Cys)) lie at residues 33-38 (TISHEC) and 42-50 (TWAFLATCC). The segment at residues 35–49 (SHECHLNTWAFLATC) is a cross-link (lanthionine (Ser-Cys)). The residue at position 48 (threonine 48) is a 2,3-didehydrobutyrine.

Belongs to the type A lantibiotic family. Maturation of lantibiotics involves the enzymatic conversion of Thr, and Ser into dehydrated AA and the formation of thioether bonds with cysteine. This is followed by membrane translocation and cleavage of the modified precursor.

Its subcellular location is the secreted. The protein localises to the cell surface. In terms of biological role, lanthionine-containing peptide antibiotic (lantibiotic) active on certain Gram-positive bacteria. The bactericidal activity of lantibiotics is based on depolarization of energized bacterial cytoplasmic membranes, initiated by the formation of aqueous transmembrane pores. This is Lantibiotic streptococcin A-M49 (scnA') from Streptococcus pyogenes serotype M49.